The following is a 148-amino-acid chain: Protein Turandot Z (148 aa).

An N-terminal signal peptide occupies residues Met1–Ala23.

The protein belongs to the Turandot family.

It is found in the secreted. In terms of biological role, a humoral factor that may play a role in stress tolerance. The polypeptide is Protein Turandot Z (Drosophila simulans (Fruit fly)).